A 1997-amino-acid polypeptide reads, in one-letter code: Otoferlin (1997 aa).

The C2 1 domain occupies 1-98 (MALLIHLKTV…VEESHVEVTD (98 aa)). Over 1–1963 (MALLIHLKTV…ARYFLWHTYR (1963 aa)) the chain is Cytoplasmic. A disordered region spans residues 128 to 171 (WDDGDFLGDESLQEEEKDSQETDGLLPGSRPSSRPPGEKSFRRA). Over residues 129 to 145 (DDGDFLGDESLQEEEKD) the composition is skewed to acidic residues. C2 domains are found at residues 236–357 (KRSK…HKWA) and 400–531 (IEGN…FLPT). The disordered stretch occupies residues 642–694 (NEVDGLSRPQRPRPRKEPGDEEEVDLIQNASDDEAGDAGDLASVSSTPPMRPQ). Residues 660–678 (GDEEEVDLIQNASDDEAGD) are compositionally biased toward acidic residues. Residues 792 to 821 (RERLKSCMRELENMGQQARMLRAQVKRHTV) adopt a coiled-coil conformation. 2 C2 domains span residues 944–1069 (LHAF…PPRF) and 1115–1242 (DRGP…PSWN). Ca(2+) contacts are provided by D976, D982, D1038, D1040, and D1046. Disordered regions lie at residues 1299–1324 (AEEEKEKKKKKKGTAEEPEEEEPDES) and 1343–1405 (LRQQ…KPKI). Composition is skewed to acidic residues over residues 1314-1324 (EEPEEEEPDES) and 1352-1361 (DLEEKEEVDN). The span at 1370–1383 (KGKEKARAAKEEKK) shows a compositional bias: basic and acidic residues. Residues 1387–1396 (QSSGSGQGSE) show a composition bias toward low complexity. 2 consecutive C2 domains span residues 1464–1593 (LPED…ATCG) and 1714–1865 (DMPA…KQCT). Ca(2+) is bound by residues D1508, D1514, D1563, D1565, D1571, D1836, S1839, and D1842. The chain crosses the membrane as a helical span at residues 1964–1984 (WLLLKLLLLLLLLLLLALFLY). The Extracellular portion of the chain corresponds to 1985 to 1997 (SVPGYLVKKILGA).

The protein belongs to the ferlin family. Interacts with SNAP2; the interaction is direct. Interacts with STX1; the interaction is direct. Interacts with RAB8B. It depends on Ca(2+) as a cofactor. As to expression, isoform 1 and isoform 3 are found in adult brain. Isoform 2 is expressed in the fetus and in adult brain, heart, placenta, skeletal muscle and kidney.

The protein resides in the cytoplasmic vesicle. The protein localises to the secretory vesicle. Its subcellular location is the synaptic vesicle membrane. It localises to the basolateral cell membrane. It is found in the endoplasmic reticulum membrane. The protein resides in the golgi apparatus membrane. The protein localises to the presynaptic cell membrane. Its subcellular location is the cell membrane. Functionally, key calcium ion sensor involved in the Ca(2+)-triggered synaptic vesicle-plasma membrane fusion and in the control of neurotransmitter release at these output synapses. Interacts in a calcium-dependent manner to the presynaptic SNARE proteins at ribbon synapses of cochlear inner hair cells (IHCs) to trigger exocytosis of neurotransmitter. Also essential to synaptic exocytosis in immature outer hair cells (OHCs). May also play a role within the recycling of endosomes. The sequence is that of Otoferlin (OTOF) from Homo sapiens (Human).